The chain runs to 165 residues: Putative protein FAM86C2P (165 aa).

It belongs to the class I-like SAM-binding methyltransferase superfamily. EEF2KMT family.

This Homo sapiens (Human) protein is Putative protein FAM86C2P (FAM86C2P).